The sequence spans 318 residues: Transaldolase (318 aa).

K132 acts as the Schiff-base intermediate with substrate in catalysis.

The protein belongs to the transaldolase family. Type 1 subfamily. In terms of assembly, homodimer.

Its subcellular location is the cytoplasm. It carries out the reaction D-sedoheptulose 7-phosphate + D-glyceraldehyde 3-phosphate = D-erythrose 4-phosphate + beta-D-fructose 6-phosphate. The protein operates within carbohydrate degradation; pentose phosphate pathway; D-glyceraldehyde 3-phosphate and beta-D-fructose 6-phosphate from D-ribose 5-phosphate and D-xylulose 5-phosphate (non-oxidative stage): step 2/3. In terms of biological role, transaldolase is important for the balance of metabolites in the pentose-phosphate pathway. In Shewanella woodyi (strain ATCC 51908 / MS32), this protein is Transaldolase.